The sequence spans 272 residues: MPNRTVFFVSDGTGITAETFGNSILAQFSAKPRHVRRPFIDTPDKAYQVVREINDTAGREGKRPIVFITLIDTEVRGIIRSAHCLVLDMLGTFVEPLEAEFGIKSNHRVGRFDDISKSQEYTDRIEAINFSLAHDDGQSSKNLDIADVILVGVSRSGKTPTSLYLAMQHGIKAANYPLIPEDFDRGALPSALVPHKKKCFGLTIAPERLREIRHERRPNSKYASLENCRLEVSAAESMMGREGIAWLSSTHKSIEEIATTILRDIRPDRLIY.

152–159 (GVSRSGKT) is an ADP binding site.

This sequence belongs to the pyruvate, phosphate/water dikinase regulatory protein family. PSRP subfamily.

It catalyses the reaction [pyruvate, water dikinase] + ADP = [pyruvate, water dikinase]-phosphate + AMP + H(+). It carries out the reaction [pyruvate, water dikinase]-phosphate + phosphate + H(+) = [pyruvate, water dikinase] + diphosphate. Bifunctional serine/threonine kinase and phosphorylase involved in the regulation of the phosphoenolpyruvate synthase (PEPS) by catalyzing its phosphorylation/dephosphorylation. The protein is Putative phosphoenolpyruvate synthase regulatory protein of Methylibium petroleiphilum (strain ATCC BAA-1232 / LMG 22953 / PM1).